The chain runs to 122 residues: NADPH-dependent 7-cyano-7-deazaguanine reductase (122 aa).

Cysteine 34 functions as the Thioimide intermediate in the catalytic mechanism. The active-site Proton donor is aspartate 41. Substrate contacts are provided by residues 56 to 58 (VEL) and 75 to 76 (HE).

It belongs to the GTP cyclohydrolase I family. QueF type 1 subfamily.

The protein localises to the cytoplasm. The catalysed reaction is 7-aminomethyl-7-carbaguanine + 2 NADP(+) = 7-cyano-7-deazaguanine + 2 NADPH + 3 H(+). Its pathway is tRNA modification; tRNA-queuosine biosynthesis. In terms of biological role, catalyzes the NADPH-dependent reduction of 7-cyano-7-deazaguanine (preQ0) to 7-aminomethyl-7-deazaguanine (preQ1). The chain is NADPH-dependent 7-cyano-7-deazaguanine reductase from Anaeromyxobacter dehalogenans (strain 2CP-C).